A 202-amino-acid chain; its full sequence is Venom allergen 5 (202 aa).

Disulfide bonds link Cys4–Cys16, Cys8–Cys101, Cys26–Cys94, and Cys168–Cys185. One can recognise an SCP domain in the interval Lys46–Tyr187.

It belongs to the CRISP family. Venom allergen 5-like subfamily. As to expression, expressed by the venom gland.

The protein resides in the secreted. This is Venom allergen 5 from Vespa mandarinia (Asian giant hornet).